The chain runs to 210 residues: Guanylate kinase (210 aa).

The Guanylate kinase-like domain occupies Gly6–Leu186. Ala13–Ser20 provides a ligand contact to ATP.

This sequence belongs to the guanylate kinase family.

It is found in the cytoplasm. It carries out the reaction GMP + ATP = GDP + ADP. Its function is as follows. Essential for recycling GMP and indirectly, cGMP. The polypeptide is Guanylate kinase (Blochmanniella floridana).